The primary structure comprises 685 residues: UvrABC system protein B (685 aa).

In terms of domain architecture, Helicase ATP-binding spans 30 to 188; sequence DGVLRGDRWQ…QELVSLHYIR (159 aa). Residue 43–50 coordinates ATP; it reads GVTGSGKT. The Beta-hairpin motif lies at 96–119; the sequence is YYDFYQPEAYLPALDKYIAKDLRI. Positions 435-597 constitute a Helicase C-terminal domain; it reads QIDDLLAEIR…ITPRSIRKSL (163 aa). The 36-residue stretch at 641-676 folds into the UVR domain; sequence YAMVAELRLEMNEAAIQMEYEKAAYLRDEIARLMHG.

Belongs to the UvrB family. Forms a heterotetramer with UvrA during the search for lesions. Interacts with UvrC in an incision complex.

The protein localises to the cytoplasm. In terms of biological role, the UvrABC repair system catalyzes the recognition and processing of DNA lesions. A damage recognition complex composed of 2 UvrA and 2 UvrB subunits scans DNA for abnormalities. Upon binding of the UvrA(2)B(2) complex to a putative damaged site, the DNA wraps around one UvrB monomer. DNA wrap is dependent on ATP binding by UvrB and probably causes local melting of the DNA helix, facilitating insertion of UvrB beta-hairpin between the DNA strands. Then UvrB probes one DNA strand for the presence of a lesion. If a lesion is found the UvrA subunits dissociate and the UvrB-DNA preincision complex is formed. This complex is subsequently bound by UvrC and the second UvrB is released. If no lesion is found, the DNA wraps around the other UvrB subunit that will check the other stand for damage. The polypeptide is UvrABC system protein B (Chlorobium phaeobacteroides (strain DSM 266 / SMG 266 / 2430)).